The sequence spans 335 residues: Ketol-acid reductoisomerase (NAD(P)(+)) (335 aa).

The region spanning 5 to 185 is the KARI N-terminal Rossmann domain; the sequence is AKIYTDKDTT…GGTRAGAIET (181 aa). Residues 28–31, Arg52, Ser56, and 86–89 each bind NADP(+); these read YGSQ and DMAQ. The active site involves His111. Gly137 serves as a coordination point for NADP(+). The 146-residue stretch at 186-331 folds into the KARI C-terminal knotted domain; sequence TFKEETETDL…RRLKEIIERG (146 aa). Mg(2+) is bound by residues Asp194, Glu198, Glu230, and Glu234. Substrate is bound at residue Ser255. The tract at residues 301 to 335 is disordered; sequence GSPTLSKGLEEMDKSLEEQTGRRLKEIIERGRPKS. The span at 308 to 335 shows a compositional bias: basic and acidic residues; the sequence is GLEEMDKSLEEQTGRRLKEIIERGRPKS.

Belongs to the ketol-acid reductoisomerase family. Mg(2+) is required as a cofactor.

It catalyses the reaction (2R)-2,3-dihydroxy-3-methylbutanoate + NAD(+) = (2S)-2-acetolactate + NADH + H(+). The enzyme catalyses (2R)-2,3-dihydroxy-3-methylbutanoate + NADP(+) = (2S)-2-acetolactate + NADPH + H(+). It participates in amino-acid biosynthesis; L-isoleucine biosynthesis; L-isoleucine from 2-oxobutanoate: step 2/4. Its pathway is amino-acid biosynthesis; L-valine biosynthesis; L-valine from pyruvate: step 2/4. Its function is as follows. Involved in the biosynthesis of branched-chain amino acids (BCAA). Catalyzes an alkyl-migration followed by a ketol-acid reduction of (S)-2-acetolactate (S2AL) to yield (R)-2,3-dihydroxy-isovalerate. In the isomerase reaction, S2AL is rearranged via a Mg-dependent methyl migration to produce 3-hydroxy-3-methyl-2-ketobutyrate (HMKB). In the reductase reaction, this 2-ketoacid undergoes a metal-dependent reduction by NADPH or NADH to yield (R)-2,3-dihydroxy-isovalerate. This Metallosphaera sedula (strain ATCC 51363 / DSM 5348 / JCM 9185 / NBRC 15509 / TH2) protein is Ketol-acid reductoisomerase (NAD(P)(+)).